Reading from the N-terminus, the 94-residue chain is Co-chaperonin GroES (94 aa).

This sequence belongs to the GroES chaperonin family. In terms of assembly, heptamer of 7 subunits arranged in a ring. Interacts with the chaperonin GroEL.

It is found in the cytoplasm. Functionally, together with the chaperonin GroEL, plays an essential role in assisting protein folding. The GroEL-GroES system forms a nano-cage that allows encapsulation of the non-native substrate proteins and provides a physical environment optimized to promote and accelerate protein folding. GroES binds to the apical surface of the GroEL ring, thereby capping the opening of the GroEL channel. The chain is Co-chaperonin GroES from Streptococcus pneumoniae (strain 70585).